A 256-amino-acid polypeptide reads, in one-letter code: Tryptophan synthase alpha chain (256 aa).

Residues Glu-48 and Asp-59 each act as proton acceptor in the active site.

Belongs to the TrpA family. As to quaternary structure, tetramer of two alpha and two beta chains.

The catalysed reaction is (1S,2R)-1-C-(indol-3-yl)glycerol 3-phosphate + L-serine = D-glyceraldehyde 3-phosphate + L-tryptophan + H2O. Its pathway is amino-acid biosynthesis; L-tryptophan biosynthesis; L-tryptophan from chorismate: step 5/5. In terms of biological role, the alpha subunit is responsible for the aldol cleavage of indoleglycerol phosphate to indole and glyceraldehyde 3-phosphate. This is Tryptophan synthase alpha chain from Caldicellulosiruptor bescii (strain ATCC BAA-1888 / DSM 6725 / KCTC 15123 / Z-1320) (Anaerocellum thermophilum).